The sequence spans 136 residues: Large ribosomal subunit protein bL21 (136 aa).

The protein belongs to the bacterial ribosomal protein bL21 family. Part of the 50S ribosomal subunit. Contacts protein L20.

In terms of biological role, this protein binds to 23S rRNA in the presence of protein L20. The sequence is that of Large ribosomal subunit protein bL21 from Trichodesmium erythraeum (strain IMS101).